The following is a 450-amino-acid chain: Glucose-6-phosphate isomerase (450 aa).

Glu291 functions as the Proton donor in the catalytic mechanism. Active-site residues include His312 and Lys426.

Belongs to the GPI family.

Its subcellular location is the cytoplasm. The catalysed reaction is alpha-D-glucose 6-phosphate = beta-D-fructose 6-phosphate. The protein operates within carbohydrate biosynthesis; gluconeogenesis. Its pathway is carbohydrate degradation; glycolysis; D-glyceraldehyde 3-phosphate and glycerone phosphate from D-glucose: step 2/4. Its function is as follows. Catalyzes the reversible isomerization of glucose-6-phosphate to fructose-6-phosphate. In Clostridium perfringens (strain ATCC 13124 / DSM 756 / JCM 1290 / NCIMB 6125 / NCTC 8237 / Type A), this protein is Glucose-6-phosphate isomerase.